The primary structure comprises 513 residues: Autophagy-related protein 18 (513 aa).

The WD 1 repeat unit spans residues 2 to 40; sequence SDLPIINFINFNQNGTCISIGTSQGFKIFNCEPFGRFYQ. The interval 167-225 is disordered; it reads NNINIKKSDAAEDPLRKDHFAYDPSDHSHPQSTTESTSNNHNRTYSSGNNNNTNSNPNK. Residues 172 to 195 show a composition bias toward basic and acidic residues; sequence KKSDAAEDPLRKDHFAYDPSDHSH. Positions 205–225 are enriched in low complexity; sequence NNHNRTYSSGNNNNTNSNPNK. The stretch at 248–288 is one WD 2 repeat; the sequence is AHKGEIAALKLSADGTLLATASEKGTIIRVFNVENGSKVYQ. Residues 289 to 292 are necessary for proper localization to vacuole membrane; that stretch reads FRRG. A L/FRRG motif motif is present at residues 289 to 293; the sequence is FRRGT. The stretch at 293–332 is one WD 3 repeat; it reads TYSTKISSLSFSKDNQFLAVCSSSKTVHIFKLGEKIIDNT. Residues 333-398 form a disordered region; the sequence is KPNELNSDDD…TVGRMIRKSS (66 aa). The span at 338-369 shows a compositional bias: acidic residues; the sequence is NSDDDMDDDLLPQFENGDDEEEVDEETLDEEA.

This sequence belongs to the WD repeat PROPPIN family. In terms of assembly, component of the PI(3,5)P2 regulatory complex. Interacts with ATG2 and ATG9. The ATG2-ATG18 complex is essential for autophagosome formation.

The protein resides in the preautophagosomal structure membrane. The protein localises to the vacuole membrane. It localises to the endosome membrane. In terms of biological role, component of the PI(3,5)P2 regulatory complex that regulates both the synthesis and turnover of phosphatidylinositol 3,5-bisphosphate (PtdIns(3,5)P2). Plays an important role in osmotically-induced vacuole fragmentation. Required for cytoplasm to vacuole transport (Cvt) vesicle formation, pexophagy and starvation-induced autophagy. Involved in correct ATG9 trafficking to the pre-autophagosomal structure. With ATG2, protects ATG8 from ATG4-mediated cleavage. The chain is Autophagy-related protein 18 from Kluyveromyces marxianus (strain DMKU3-1042 / BCC 29191 / NBRC 104275) (Yeast).